We begin with the raw amino-acid sequence, 731 residues long: EF-hand calcium-binding domain-containing protein 4B (731 aa).

A disordered region spans residues methionine 1–threonine 45. The 36-residue stretch at leucine 84–serine 119 folds into the EF-hand domain. Aspartate 97, aspartate 99, asparagine 101, tyrosine 103, and glutamate 108 together coordinate Ca(2+). A coiled-coil region spans residues leucine 201 to glutamate 382. The proline-rich domain (PRD) which mediates interaction with VAV1 stretch occupies residues methionine 349–serine 540. Disordered regions lie at residues serine 426–arginine 466 and cysteine 494–glycine 528. The GTP site is built by serine 554, valine 556, glycine 557, lysine 558, threonine 559, serine 560, serine 571, proline 572, and threonine 577. Threonine 559 contributes to the Mg(2+) binding site. Residues proline 572–isoleucine 580 form a switch-I region. Mg(2+)-binding residues include threonine 577 and aspartate 600. 5 residues coordinate GTP: glycine 603, asparagine 658, lysine 659, aspartate 661, and alanine 689. Residues glycine 603–aspartate 619 are switch-II. The S-geranylgeranyl cysteine moiety is linked to residue cysteine 729.

Belongs to the EFCAB4 family. As to quaternary structure, interacts with ORAI1 and STIM1; the interaction is direct and takes place in absence of Ca(2+). Forms a complex with ORAI1 and STIM1 at low concentration of Ca(2+), the complex dissociates at elevated Ca(2+) concentrations. Interacts with ORAI2 and ORAI3. In terms of assembly, interacts with DYNC1H1. Interacts with the dynein-dynactin complex in a Ca(2+)-dependent manner. Interacts with VAV1. The cofactor is Mg(2+). Expressed in the Jurkat T-cell line. As to expression, expressed in endothelial cells. Expressed in Weibel-Palade bodies (which are P-selectin/SELP negative) in endothelial cells. Expressed in the Jurkat T-cell line.

It is found in the cytoplasm. It localises to the cytoskeleton. The protein resides in the microtubule organizing center. Its subcellular location is the cell membrane. The protein localises to the golgi apparatus membrane. It is found in the golgi apparatus. It localises to the trans-Golgi network membrane. The protein resides in the vesicle. The enzyme catalyses GTP + H2O = GDP + phosphate + H(+). Ca(2+)-binding protein that plays a key role in store-operated Ca(2+) entry (SOCE) in T-cells by regulating CRAC channel activation. Acts as a cytoplasmic calcium-sensor that facilitates the clustering of ORAI1 and STIM1 at the junctional regions between the plasma membrane and the endoplasmic reticulum upon low Ca(2+) concentration. It thereby regulates CRAC channel activation, including translocation and clustering of ORAI1 and STIM1. Upon increase of cytoplasmic Ca(2+) resulting from opening of CRAC channels, dissociates from ORAI1 and STIM1, thereby destabilizing the ORAI1-STIM1 complex. Functionally, rab GTPase that mediates the trafficking of Weibel-Palade bodies (WPBs) to microtubule organizing center (MTOC) in endothelial cells in response to acute inflammatory stimuli. During histamine (but not thrombin) stimulation of endothelial cells, the dynein-bound form induces retrograde transport of a subset of WPBs along microtubules to the MTOC in a Ca(2+)-independent manner and its GTPase activity is essential for this function. Ca(2+)-regulated dynein adapter protein that activates dynein-mediated transport and dynein-dynactin motility on microtubules and regulates endosomal trafficking of CD47. Acts as an intracellular signaling module bridging two important T-cell receptor (TCR) signaling pathways, Ca(2+)-NFAT and JNK, to affect T-cell activation. In resting T-cells, is predominantly localized near TGN network in a GTP-bound form, upon TCR stimulation, localizes at the immunological synapse via interaction with VAV1 to activate downstream Ca(2+)-NFAT and JNK signaling pathways. Plays a role in T-helper 1 (Th1) cell differentiation and T-helper 17 (Th17) cell effector function. Plays a role in store-operated Ca(2+) entry (SOCE) in T-cells by regulating CRAC channel activation. This chain is EF-hand calcium-binding domain-containing protein 4B, found in Homo sapiens (Human).